Here is a 357-residue protein sequence, read N- to C-terminus: Alanine racemase (357 aa).

Lys-35 serves as the catalytic Proton acceptor; specific for D-alanine. Position 35 is an N6-(pyridoxal phosphate)lysine (Lys-35). Arg-130 contributes to the substrate binding site. Tyr-253 (proton acceptor; specific for L-alanine) is an active-site residue. Met-302 contacts substrate.

It belongs to the alanine racemase family. The cofactor is pyridoxal 5'-phosphate.

The enzyme catalyses L-alanine = D-alanine. It participates in amino-acid biosynthesis; D-alanine biosynthesis; D-alanine from L-alanine: step 1/1. Catalyzes the interconversion of L-alanine and D-alanine. May also act on other amino acids. This is Alanine racemase (alr) from Wigglesworthia glossinidia brevipalpis.